A 133-amino-acid chain; its full sequence is Triatox (133 aa).

The N-terminal stretch at 1 to 22 (MTTLRVLLAVCCAAYCILAEDV) is a signal peptide. The CUB domain occupies 23–125 (TVPANGELKL…RAMCTVYSAE (103 aa)). C70 and C86 are oxidised to a cystine.

This sequence belongs to the venom CUB family. In terms of tissue distribution, expressed by the venom gland.

It is found in the secreted. Functionally, may function as an antimicrobial peptide and may be related to the innate defense of the insect in the salivary glands. In Triatoma infestans (Assassin bug), this protein is Triatox.